The chain runs to 365 residues: Peptide chain release factor 2 (365 aa).

Q252 is modified (N5-methylglutamine).

It belongs to the prokaryotic/mitochondrial release factor family. Post-translationally, methylated by PrmC. Methylation increases the termination efficiency of RF2.

It is found in the cytoplasm. Functionally, peptide chain release factor 2 directs the termination of translation in response to the peptide chain termination codons UGA and UAA. The sequence is that of Peptide chain release factor 2 from Yersinia pseudotuberculosis serotype O:1b (strain IP 31758).